The chain runs to 347 residues: uncharacterized protein (347 aa).

The Cytoplasmic segment spans residues methionine 1–histidine 44. A helical; Signal-anchor for type II membrane protein membrane pass occupies residues leucine 45–leucine 62. Over lysine 63–leucine 347 the chain is Lumenal.

The protein belongs to the glycosyltransferase 34 family.

The protein localises to the endoplasmic reticulum membrane. This is an uncharacterized protein from Schizosaccharomyces pombe (strain 972 / ATCC 24843) (Fission yeast).